Here is a 253-residue protein sequence, read N- to C-terminus: Tropomyosin-1 (253 aa).

A coiled-coil region spans residues 7–253 (VNKLVRLQGK…MDDVGDDDTQ (247 aa)).

Belongs to the tropomyosin family. Homodimer.

Functionally, tropomyosin, in association with the troponin complex, plays a central role in the calcium dependent regulation of muscle contraction. The chain is Tropomyosin-1 (TROP1) from Hydra vulgaris (Hydra).